The following is a 317-amino-acid chain: Beta-ketoacyl-[acyl-carrier-protein] synthase III (317 aa).

Catalysis depends on residues Cys112 and His244. Residues 245–249 (QANLR) are ACP-binding. Asn274 is a catalytic residue.

It belongs to the thiolase-like superfamily. FabH family. As to quaternary structure, homodimer.

It is found in the cytoplasm. It carries out the reaction malonyl-[ACP] + acetyl-CoA + H(+) = 3-oxobutanoyl-[ACP] + CO2 + CoA. It functions in the pathway lipid metabolism; fatty acid biosynthesis. Its function is as follows. Catalyzes the condensation reaction of fatty acid synthesis by the addition to an acyl acceptor of two carbons from malonyl-ACP. Catalyzes the first condensation reaction which initiates fatty acid synthesis and may therefore play a role in governing the total rate of fatty acid production. Possesses both acetoacetyl-ACP synthase and acetyl transacylase activities. Its substrate specificity determines the biosynthesis of branched-chain and/or straight-chain of fatty acids. The protein is Beta-ketoacyl-[acyl-carrier-protein] synthase III of Serratia proteamaculans (strain 568).